Consider the following 79-residue polypeptide: Suppressor of tumorigenicity 20 protein (79 aa).

As to expression, expressed in leukocytes, lung, spleen, liver, heart, kidney, muscle and uterine cervix. Down-regulated in cervical cancer.

May act as a tumor suppressor. Promotes apoptosis of cancer cells. In Homo sapiens (Human), this protein is Suppressor of tumorigenicity 20 protein (ST20).